Consider the following 298-residue polypeptide: uncharacterized protein (298 aa).

This is an uncharacterized protein from Acanthamoeba polyphaga mimivirus (APMV).